The following is a 73-amino-acid chain: Disintegrin trigramin-beta-2 (73 aa).

In terms of domain architecture, Disintegrin spans 1-73 (EAGKDCDCGS…AGCPRNPFHA (73 aa)). 6 cysteine pairs are disulfide-bonded: cysteine 6–cysteine 21, cysteine 8–cysteine 16, cysteine 15–cysteine 38, cysteine 29–cysteine 35, cysteine 34–cysteine 59, and cysteine 47–cysteine 66. A Cell attachment site motif is present at residues 51–53 (RGD).

This sequence belongs to the venom metalloproteinase (M12B) family. P-II subfamily. P-IIa sub-subfamily. Monomer (disintegrin). Expressed by the venom gland.

It is found in the secreted. Its function is as follows. Inhibits fibrinogen interaction with platelets. Acts by binding to the alpha-IIb/beta-3 receptor (ITGA2B/ITGB3) on the platelet surface and inhibits aggregation induced by ADP, thrombin, platelet-activating factor and collagen. The sequence is that of Disintegrin trigramin-beta-2 from Craspedocephalus gramineus (Bamboo pit viper).